The chain runs to 159 residues: Cyclic pyranopterin monophosphate synthase (159 aa).

Substrate contacts are provided by residues 76-78 and 114-115; these read LCH and ME. The active site involves Asp129.

It belongs to the MoaC family. As to quaternary structure, homohexamer; trimer of dimers.

The enzyme catalyses (8S)-3',8-cyclo-7,8-dihydroguanosine 5'-triphosphate = cyclic pyranopterin phosphate + diphosphate. Its pathway is cofactor biosynthesis; molybdopterin biosynthesis. Catalyzes the conversion of (8S)-3',8-cyclo-7,8-dihydroguanosine 5'-triphosphate to cyclic pyranopterin monophosphate (cPMP). The polypeptide is Cyclic pyranopterin monophosphate synthase (Oleidesulfovibrio alaskensis (strain ATCC BAA-1058 / DSM 17464 / G20) (Desulfovibrio alaskensis)).